The chain runs to 669 residues: p135Gag-Myb-Ets-transforming protein (669 aa).

The segment covering 1-10 (NSTMRRKVEQ) has biased composition (basic and acidic residues). 2 disordered regions span residues 1–27 (NSTM…SATT) and 132–153 (TQNH…NTMT). Residues 90–142 (PAAAAIQRHYNDEDPEKEKRIKELELLLMSTENELKGQQALPTQNHTANYPGW) are transcriptional activation domain. The PNT domain occupies 276–361 (ATFSGFAKEQ…EHLEILQKEE (86 aa)). A DNA-binding region (ETS) is located at residues 556 to 640 (GSGPIQLWQF…AGKRYVYRFV (85 aa)).

Its subcellular location is the host nucleus. In terms of biological role, DNA-binding protein that specifically recognizes the sequence 5'-YAAC[GT]G-3'. The Myb-Ets protein induces predominantly erythroblastosis in chicken and transforms avian erythroblasts and immature myelomonocytic cells in culture. It appears that the Ets domain is responsible for the effects on erythroid cells and that the Myb domain encodes the myeloid-transforming capacity. The polypeptide is p135Gag-Myb-Ets-transforming protein (GAG) (Avian leukemia virus E26).